A 261-amino-acid chain; its full sequence is Cytochrome c oxidase subunit 3 (261 aa).

The Mitochondrial matrix segment spans residues 1 to 15 (MTHQTHAYHMVNPSP). Residues 16–34 (WPLTGALSALLMTSGLTMW) traverse the membrane as a helical segment. The Mitochondrial intermembrane portion of the chain corresponds to 35 to 40 (FHFNSM). Residues 41 to 66 (LLLSLGLLTNTLTMYQWWRDIIREST) traverse the membrane as a helical segment. Residues 67-72 (FQGHHT) are Mitochondrial matrix-facing. Residues 73-105 (SVVQKGLRYGMILFIISEVLFFTGFFWAFYHSS) traverse the membrane as a helical segment. Over 106-128 (LAPTPELGGCWPPTGIHPLNPLE) the chain is Mitochondrial intermembrane. A helical membrane pass occupies residues 129–152 (VPLLNTSILLASGVSITWAHHSLM). The Mitochondrial matrix portion of the chain corresponds to 153–155 (EGD). The chain crosses the membrane as a helical span at residues 156-183 (RKHMIQALSITIALGVYFTLLQASEYYE). The Mitochondrial intermembrane portion of the chain corresponds to 184-190 (APFTISD). A helical membrane pass occupies residues 191-223 (GVYGSTFFVATGFHGLHVIIGSTFLAVCLLRQL). Topologically, residues 224-232 (KFHFTSNHH) are mitochondrial matrix. The helical transmembrane segment at 233-256 (FGFEAAAWYWHFVDVVWLFLYVSI) threads the bilayer. The Mitochondrial intermembrane portion of the chain corresponds to 257-261 (YWWGS).

Belongs to the cytochrome c oxidase subunit 3 family. Component of the cytochrome c oxidase (complex IV, CIV), a multisubunit enzyme composed of 14 subunits. The complex is composed of a catalytic core of 3 subunits MT-CO1, MT-CO2 and MT-CO3, encoded in the mitochondrial DNA, and 11 supernumerary subunits COX4I, COX5A, COX5B, COX6A, COX6B, COX6C, COX7A, COX7B, COX7C, COX8 and NDUFA4, which are encoded in the nuclear genome. The complex exists as a monomer or a dimer and forms supercomplexes (SCs) in the inner mitochondrial membrane with NADH-ubiquinone oxidoreductase (complex I, CI) and ubiquinol-cytochrome c oxidoreductase (cytochrome b-c1 complex, complex III, CIII), resulting in different assemblies (supercomplex SCI(1)III(2)IV(1) and megacomplex MCI(2)III(2)IV(2)).

The protein resides in the mitochondrion inner membrane. It carries out the reaction 4 Fe(II)-[cytochrome c] + O2 + 8 H(+)(in) = 4 Fe(III)-[cytochrome c] + 2 H2O + 4 H(+)(out). Its function is as follows. Component of the cytochrome c oxidase, the last enzyme in the mitochondrial electron transport chain which drives oxidative phosphorylation. The respiratory chain contains 3 multisubunit complexes succinate dehydrogenase (complex II, CII), ubiquinol-cytochrome c oxidoreductase (cytochrome b-c1 complex, complex III, CIII) and cytochrome c oxidase (complex IV, CIV), that cooperate to transfer electrons derived from NADH and succinate to molecular oxygen, creating an electrochemical gradient over the inner membrane that drives transmembrane transport and the ATP synthase. Cytochrome c oxidase is the component of the respiratory chain that catalyzes the reduction of oxygen to water. Electrons originating from reduced cytochrome c in the intermembrane space (IMS) are transferred via the dinuclear copper A center (CU(A)) of subunit 2 and heme A of subunit 1 to the active site in subunit 1, a binuclear center (BNC) formed by heme A3 and copper B (CU(B)). The BNC reduces molecular oxygen to 2 water molecules using 4 electrons from cytochrome c in the IMS and 4 protons from the mitochondrial matrix. This chain is Cytochrome c oxidase subunit 3 (MT-CO3), found in Sus scrofa (Pig).